Reading from the N-terminus, the 304-residue chain is N-carbamoyl-D-amino acid hydrolase (304 aa).

The region spanning 5 to 276 is the CN hydrolase domain; that stretch reads MILAVGQQGP…DEVITAAVCL (272 aa). Residues Glu47, Lys127, and Cys172 contribute to the active site.

In terms of assembly, homotetramer.

It carries out the reaction an N-carbamoyl-D-amino acid + H2O + 2 H(+) = a D-alpha-amino acid + NH4(+) + CO2. Its activity is regulated as follows. The activity decreases with increasing concentration of H(2)O(2). Has 68% and 43% of activity remaining upon treatment with 0.1 and 0.2 mM H(2)O(2) for 30 minutes, respectively. Inhibited significantly by 2 mM Zn(2+), Cu(2+) and Ag(+), moderately by Co(2+), Mn(2+), Sn(2+) and Mg(2+), and only slightly by Ba(2+). Slightly activated by Fe(2+) and Ca(2+). No effect on activity by metal chelators EDTA and 8-hydroxyquinoline at 2 mM or by dithiothreitol, 2-mercaptoethanol or phenylmethanesulfonyl fluoride. Functionally, catalyzes the hydrolysis of N-carbamoyl-D-amino acids to the corresponding D-amino acids. Hydrolyzes aromatic and aliphatic N-carbamoyl-D-amino acids in vitro. Effectively hydrolyzes N-carbamoyl-D-p-hydroxyphenylglycine and N-carbamoyl-DL-p-hydroxyphenylglycine, and to a lesser extent N-carbamoyl-D-methionine. No activity for N-carbamoyl-L-amino acids, N-carbamoyl-beta-alanine or (RS)-alpha-ethyl-N-carbamoylphenylglycine in vitro. The polypeptide is N-carbamoyl-D-amino acid hydrolase (Ensifer adhaerens (Sinorhizobium morelense)).